The sequence spans 78 residues: MNRTKIVLGAVVLASTLLAGCSSTAKVDQLTSDIQTLNAKVDQLSNDVNAVHTDVQAAKDDAARANQRLDNQVRSYKK.

The first 20 residues, 1–20 (MNRTKIVLGAVVLASTLLAG), serve as a signal peptide directing secretion. Cysteine 21 is lipidated: N-palmitoyl cysteine. Residue cysteine 21 is the site of S-diacylglycerol cysteine attachment. Repeats lie at residues 24 to 34 (TAKVDQLTSDI) and 38 to 48 (NAKVDQLSNDV). Residues 27 to 75 (VDQLTSDIQTLNAKVDQLSNDVNAVHTDVQAAKDDAARANQRLDNQVRS) are a coiled coil. Lysine 78 carries the post-translational modification N6-murein peptidoglycan lysine.

The protein belongs to the Lpp family. Homotrimer.

The protein resides in the cell outer membrane. The protein localises to the secreted. Its subcellular location is the cell wall. Its function is as follows. A highly abundant outer membrane lipoprotein that controls the distance between the inner and outer membranes. The only protein known to be covalently linked to the peptidoglycan network (PGN). Also non-covalently binds the PGN. The link between the cell outer membrane and PGN contributes to maintenance of the structural and functional integrity of the cell envelope, and maintains the correct distance between the PGN and the outer membrane. The polypeptide is Major outer membrane lipoprotein Lpp (Photorhabdus laumondii subsp. laumondii (strain DSM 15139 / CIP 105565 / TT01) (Photorhabdus luminescens subsp. laumondii)).